The sequence spans 260 residues: Cell wall synthesis protein Wag31 (260 aa).

Residues 31 to 64 (FLDLVENELTRLIEENSDLRQRINELDQELAAGG) are a coiled coil. Thr73 is subject to Phosphothreonine. The stretch at 161-196 (MLADAQSRSEAQLRQAQEKADALQADAERKHSEIMG) forms a coiled coil. The tract at residues 233 to 260 (ELGQRGSAAPVDSNADAGGFDQFNRGKN) is disordered.

The protein belongs to the DivIVA family. In terms of assembly, forms homooligomers. Post-translationally, phosphorylated by PknA. Phosphorylation enhances polar localization, which in turn heightens polar peptidoglycan biosynthesis.

The protein resides in the cytoplasm. Functionally, important for maintaining cell shape and cell wall integrity by localizing peptidoglycan synthesis to the cell poles. The polypeptide is Cell wall synthesis protein Wag31 (wag31) (Mycobacterium tuberculosis (strain CDC 1551 / Oshkosh)).